We begin with the raw amino-acid sequence, 142 residues long: Hemoglobin anodic subunit alpha (142 aa).

S1 is modified (N-acetylserine). One can recognise a Globin domain in the interval 1–142 (SLSTKDKAVV…LALALADRYR (142 aa)). H59 contacts O2. H88 provides a ligand contact to heme b.

This sequence belongs to the globin family. As to quaternary structure, heterotetramer of two alpha chains and two beta chains. In terms of tissue distribution, red blood cells.

Involved in oxygen transport from gills to the various peripheral tissues. This Gymnothorax unicolor (Brown moray) protein is Hemoglobin anodic subunit alpha.